The chain runs to 156 residues: Endoribonuclease YbeY (156 aa).

Zn(2+)-binding residues include His-111, His-115, and His-121.

Belongs to the endoribonuclease YbeY family. Zn(2+) is required as a cofactor.

The protein localises to the cytoplasm. In terms of biological role, single strand-specific metallo-endoribonuclease involved in late-stage 70S ribosome quality control and in maturation of the 3' terminus of the 16S rRNA. The protein is Endoribonuclease YbeY of Hahella chejuensis (strain KCTC 2396).